The sequence spans 97 residues: Essential MCU regulator, mitochondrial (97 aa).

A mitochondrion-targeting transit peptide spans 1-35; that stretch reads MIVPRLALPISLALQRVSRRVAEHPHNLRILQRHM. Residues 53-73 form a helical membrane-spanning segment; the sequence is PFGLLAIFCAVIPGLFVGATI.

The protein belongs to the SMDT1/EMRE family.

It is found in the mitochondrion inner membrane. In terms of biological role, essential regulatory subunit of the mitochondrial calcium uniporter MCU channel, a protein that mediates calcium uptake into mitochondria. The protein is Essential MCU regulator, mitochondrial of Drosophila melanogaster (Fruit fly).